The primary structure comprises 873 residues: Aminopeptidase M1-D (873 aa).

The interval Leu-96–Val-203 is required for membrane association. Substrate contacts are provided by residues Glu-136 and Gly-269–Asn-273. His-305 lines the Zn(2+) pocket. Catalysis depends on Glu-306, which acts as the Proton acceptor. His-309 and Glu-328 together coordinate Zn(2+). The short motif at Leu-721–Leu-722 is the Dileucine internalization motif element.

Belongs to the peptidase M1 family. In terms of assembly, homodimer. Zn(2+) serves as cofactor.

Its subcellular location is the membrane. The protein localises to the microsome membrane. The protein resides in the cytoplasm. It carries out the reaction Release of an N-terminal amino acid, Xaa-|-Yaa- from a peptide, amide or arylamide. Xaa is preferably Ala, but may be most amino acids including Pro (slow action). When a terminal hydrophobic residue is followed by a prolyl residue, the two may be released as an intact Xaa-Pro dipeptide.. The chain is Aminopeptidase M1-D from Oryza sativa subsp. japonica (Rice).